Consider the following 225-residue polypeptide: Uracil-DNA glycosylase (225 aa).

The Proton acceptor role is filled by D65.

The protein belongs to the uracil-DNA glycosylase (UDG) superfamily. UNG family.

The protein localises to the cytoplasm. The enzyme catalyses Hydrolyzes single-stranded DNA or mismatched double-stranded DNA and polynucleotides, releasing free uracil.. In terms of biological role, excises uracil residues from the DNA which can arise as a result of misincorporation of dUMP residues by DNA polymerase or due to deamination of cytosine. The sequence is that of Uracil-DNA glycosylase from Bacillus cereus (strain ZK / E33L).